The primary structure comprises 832 residues: Leucine--tRNA ligase (832 aa).

Residues 58 to 68 carry the 'HIGH' region motif; it reads PYPSGDLHMGH. A 'KMSKS' region motif is present at residues 598–602; that stretch reads AMSKS. ATP is bound at residue K601.

Belongs to the class-I aminoacyl-tRNA synthetase family.

It is found in the cytoplasm. The enzyme catalyses tRNA(Leu) + L-leucine + ATP = L-leucyl-tRNA(Leu) + AMP + diphosphate. The chain is Leucine--tRNA ligase from Acidothermus cellulolyticus (strain ATCC 43068 / DSM 8971 / 11B).